The primary structure comprises 529 residues: Peptide chain release factor 3 (529 aa).

The tr-type G domain maps to 10 to 278 (ARRRTFAIIS…NFVDLAPAPR (269 aa)). Residues 19–26 (SHPDAGKT), 87–91 (DTPGH), and 141–144 (NKLD) each bind GTP.

It belongs to the TRAFAC class translation factor GTPase superfamily. Classic translation factor GTPase family. PrfC subfamily.

The protein localises to the cytoplasm. Functionally, increases the formation of ribosomal termination complexes and stimulates activities of RF-1 and RF-2. It binds guanine nucleotides and has strong preference for UGA stop codons. It may interact directly with the ribosome. The stimulation of RF-1 and RF-2 is significantly reduced by GTP and GDP, but not by GMP. This Nitratidesulfovibrio vulgaris (strain ATCC 29579 / DSM 644 / CCUG 34227 / NCIMB 8303 / VKM B-1760 / Hildenborough) (Desulfovibrio vulgaris) protein is Peptide chain release factor 3.